Here is a 130-residue protein sequence, read N- to C-terminus: Cytochrome b-c1 complex subunit 7 (130 aa).

This sequence belongs to the UQCRB/QCR7 family. In terms of assembly, component of the ubiquinol-cytochrome c oxidoreductase (cytochrome b-c1 complex, complex III, CIII), a multisubunit enzyme composed of 3 respiratory subunits cytochrome b, cytochrome c1 and Rieske protein, 2 core protein subunits, and additional low-molecular weight protein subunits. The complex exists as an obligatory dimer and forms supercomplexes (SCs) in the inner mitochondrial membrane with cytochrome c oxidase (complex IV, CIV).

The protein localises to the mitochondrion inner membrane. Functionally, component of the ubiquinol-cytochrome c oxidoreductase, a multisubunit transmembrane complex that is part of the mitochondrial electron transport chain which drives oxidative phosphorylation. The respiratory chain contains 3 multisubunit complexes succinate dehydrogenase (complex II, CII), ubiquinol-cytochrome c oxidoreductase (cytochrome b-c1 complex, complex III, CIII) and cytochrome c oxidase (complex IV, CIV), that cooperate to transfer electrons derived from NADH and succinate to molecular oxygen, creating an electrochemical gradient over the inner membrane that drives transmembrane transport and the ATP synthase. The cytochrome b-c1 complex catalyzes electron transfer from ubiquinol to cytochrome c, linking this redox reaction to translocation of protons across the mitochondrial inner membrane, with protons being carried across the membrane as hydrogens on the quinol. In the process called Q cycle, 2 protons are consumed from the matrix, 4 protons are released into the intermembrane space and 2 electrons are passed to cytochrome c. The polypeptide is Cytochrome b-c1 complex subunit 7 (Schistosoma mansoni (Blood fluke)).